Here is a 284-residue protein sequence, read N- to C-terminus: MIRIPAVAGSFYEADPVRLRKQIEWSFLHDLGPKSLPSVPQNKPPQRSNRFFVVPHAGYMYSGPVAAHAYYHLSLEGSPDTVIILGPNHTGLGSYVSIWHKGKWKTPLGEVSVDDEISLELVKLTEIIDIDERAHLYEHSIEVQIPFLQYLFGQNFKIVPIVIMMQTPDVAESLAEGIYKLVSSGKKDIVVLASSDLNHYEPHDKTIEKDNLAIDEIQKLDYKGLFRVVEEKDVTACGYGPIMTVLILAKKLGKKPYVLRHATSGDTSGDKSSVVGYLSVRFGD.

This sequence belongs to the MEMO1 family.

In Sulfolobus acidocaldarius (strain ATCC 33909 / DSM 639 / JCM 8929 / NBRC 15157 / NCIMB 11770), this protein is MEMO1 family protein Saci_0089.